A 66-amino-acid chain; its full sequence is Alpha-like toxin BeM9 (66 aa).

Positions 2-66 (RDAYIAKPHN…VPIRIPGKCH (65 aa)) constitute an LCN-type CS-alpha/beta domain. Intrachain disulfides connect Cys12-Cys65, Cys16-Cys38, Cys24-Cys48, and Cys28-Cys50.

The protein belongs to the long (4 C-C) scorpion toxin superfamily. Sodium channel inhibitor family. Alpha subfamily. In terms of tissue distribution, expressed by the venom gland.

Its subcellular location is the secreted. Its function is as follows. Alpha toxins bind voltage-independently at site-3 of sodium channels (Nav) and inhibit the inactivation of the activated channels, thereby blocking neuronal transmission. This toxin is active on both mammals and insects, since it inhibits inactivation of rNav1.4/SCN4A, hNav1.5/SCN5A, mNav1.6/SCN8A and insect BgNav1 and DmNav1 channels. In vivo, it shows paralytic activity in mice. The sequence is that of Alpha-like toxin BeM9 from Mesobuthus eupeus (Lesser Asian scorpion).